The primary structure comprises 465 residues: Lysophospholipid acyltransferase 2 (465 aa).

9 helical membrane-spanning segments follow: residues 15 to 35, 55 to 75, 86 to 106, 161 to 181, 214 to 234, 266 to 286, 356 to 376, 399 to 419, and 434 to 454; these read VSVAVLRFLLCFVATIPISFL, FLSYLSFGFSSNLHFLVPMTI, LSGFITFFLGFAYLIGCHVFY, SLIEYFGYCLCCGSHFAGPVF, AVFQAAICMALYLYLVPQFPL, YFIWSISEASIIISGLGFSGW, AVWHGLYPGYIIFFVQSALMI, VLVLINFLYTVVVLNYSSVGF, and VYYIGTVIPIAVLLLSYLVPV. H359 is a catalytic residue.

It belongs to the membrane-bound acyltransferase family. Interacts with GPAT9 and DGAT1. Expressed in rosette leaves, pollen grains, developing embryos and developing seeds.

The protein localises to the endoplasmic reticulum membrane. It carries out the reaction a 1-acyl-sn-glycero-3-phosphocholine + an acyl-CoA = a 1,2-diacyl-sn-glycero-3-phosphocholine + CoA. The enzyme catalyses 1-(9Z-octadecenoyl)-sn-glycero-3-phosphocholine + (9Z)-octadecenoyl-CoA = 1,2-di-(9Z-octadecenoyl)-sn-glycero-3-phosphocholine + CoA. The catalysed reaction is 1-(9Z-octadecenoyl)-sn-glycero-3-phosphocholine + (9Z,12Z)-octadecadienoyl-CoA = 1-(9Z)-octadecenoyl-2-(9Z,12Z)-octadecadienoyl-sn-glycero-3-phosphocholine + CoA. It catalyses the reaction (9Z,12Z,15Z)-octadecatrienoyl-CoA + 1-(9Z-octadecenoyl)-sn-glycero-3-phosphocholine = 1-(9Z-octadecaenoyl)-2-(9Z,12Z,15Z-octadecatrienoyl)-sn-glycero-3-phosphocholine + CoA. It carries out the reaction a 1-acyl-sn-glycero-3-phosphoethanolamine + an acyl-CoA = a 1,2-diacyl-sn-glycero-3-phosphoethanolamine + CoA. The enzyme catalyses a 1-acyl-sn-glycero-3-phospho-L-serine + an acyl-CoA = a 1,2-diacyl-sn-glycero-3-phospho-L-serine + CoA. Lysophospholipid acyltransferase with broad specificity. Mediates the conversion of lysophosphatidylethanolamine (1-acyl-sn-glycero-3-phosphoethanolamine or LPE) into phosphatidylethanolamine (1,2-diacyl-sn-glycero-3-phosphoethanolamine or PE) (LPEAT activity). Catalyzes the acylation of lysophosphatidylserine (1-acyl-2-hydroxy-sn-glycero-3-phospho-L-serine or LPS) into phosphatidylserine (1,2-diacyl-sn-glycero-3-phospho-L-serine or PS) (LPSAT activity). Can convert lysophosphatidylcholine (1-acyl-sn-glycero-3-phosphocholine or LPC) into phosphatidylcholine (1,2-diacyl-sn-glycero-3-phosphocholine or PC) (LPCAT activity). Exhibits preference for C18-unsaturated acyl-CoA when transferring an acyl group to lysophosphatidylcholine. Can also utilize lysophosphatidylglycerol (LPG) as substrate in vitro. Has neither activity towards lysophosphatidic acid (LPA) nor lysophosphatidylinositol (LPI). Lysophospholipid acyltransferases catalyze the reacylation step of the phospholipid remodeling pathway also known as the Lands cycle. The primary function of the Lands cycle is to provide a route for acyl remodeling to modify fatty acid (FA) composition of phospholipids derived from the Kennedy pathway. Is involved in PC acyl editing and phosphocholine headgroup exchange between PC and diacylglycerols. This processes control the majority of acyl fluxes through PC to provide polyunsaturated fatty acids for triacylglycerols synthesis in seeds. Involved with LPCAT1 in the direct incorporation of newly synthesized fatty acids exported form the chloroplast into PC through acyl editing. The sequence is that of Lysophospholipid acyltransferase 2 from Arabidopsis thaliana (Mouse-ear cress).